Here is a 121-residue protein sequence, read N- to C-terminus: Ribonuclease P protein component (121 aa).

This sequence belongs to the RnpA family. As to quaternary structure, consists of a catalytic RNA component (M1 or rnpB) and a protein subunit.

The catalysed reaction is Endonucleolytic cleavage of RNA, removing 5'-extranucleotides from tRNA precursor.. Its function is as follows. RNaseP catalyzes the removal of the 5'-leader sequence from pre-tRNA to produce the mature 5'-terminus. It can also cleave other RNA substrates such as 4.5S RNA. The protein component plays an auxiliary but essential role in vivo by binding to the 5'-leader sequence and broadening the substrate specificity of the ribozyme. This is Ribonuclease P protein component from Geobacillus thermodenitrificans (strain NG80-2).